Here is a 583-residue protein sequence, read N- to C-terminus: Protein translocase subunit SecD (583 aa).

Helical transmembrane passes span 7–27 (FGVV…TLQW), 419–439 (LVWG…EAGV), 446–468 (LLNL…LSSI), 469–489 (AGMI…FERI), 511–531 (FWAI…LSVL), and 538–558 (GFAY…LFVS).

Belongs to the SecD/SecF family. SecD subfamily. In terms of assembly, forms a complex with SecF. Part of the essential Sec protein translocation apparatus which comprises SecA, SecYEG and auxiliary proteins SecDF. Other proteins may also be involved.

Its subcellular location is the cell inner membrane. Functionally, part of the Sec protein translocase complex. Interacts with the SecYEG preprotein conducting channel. SecDF uses the proton motive force (PMF) to complete protein translocation after the ATP-dependent function of SecA. The polypeptide is Protein translocase subunit SecD (Treponema pallidum (strain Nichols)).